The primary structure comprises 125 residues: Ly6/PLAUR domain-containing protein 2 (125 aa).

A signal peptide spans 1–22 (MRGTRLALLALVLAACGELAPA). Positions 25–100 (CYVCPEPTGV…VSCCNTELCN (76 aa)) constitute a UPAR/Ly6 domain. A glycan (N-linked (GlcNAc...) asparagine) is linked at N46. A lipid anchor (GPI-anchor amidated glycine) is attached at G103. A propeptide spans 104 to 125 (APALNSLHCGALTLLPLLSLRL) (removed in mature form).

Its subcellular location is the cell membrane. The protein is Ly6/PLAUR domain-containing protein 2 (LYPD2) of Homo sapiens (Human).